Reading from the N-terminus, the 913-residue chain is Chitin synthase 1 (913 aa).

The tract at residues 1 to 27 (MSGAPPPSSGFAPRSYGQQPLSHAPRS) is disordered. 3 residues coordinate UDP-N-acetyl-alpha-D-glucosamine: Thr-237, Glu-241, and Asp-291. Asn-420 is a glycosylation site (N-linked (GlcNAc...) asparagine). The active site involves Asp-496. A glycan (N-linked (GlcNAc...) asparagine) is linked at Asn-510. 6 helical membrane-spanning segments follow: residues 539–559 (WLNG…RIYS), 581–601 (YTAF…FIVF), 625–645 (AVYI…IIGL), 658–678 (FVGA…AGIF), 684–704 (TVHS…ASAL), and 711–731 (IFMT…IFTI). The Conserved SWG motif motif lies at 741–743 (SWG). 2 helical membrane-spanning segments follow: residues 800–820 (VLLT…YFAS) and 825–845 (MPVL…GSIG). 2 N-linked (GlcNAc...) asparagine glycosylation sites follow: Asn-867 and Asn-900.

Belongs to the chitin synthase family. Class II subfamily. Homodimer. Mn(2+) is required as a cofactor.

It localises to the cell membrane. It carries out the reaction [(1-&gt;4)-N-acetyl-beta-D-glucosaminyl](n) + UDP-N-acetyl-alpha-D-glucosamine = [(1-&gt;4)-N-acetyl-beta-D-glucosaminyl](n+1) + UDP + H(+). With respect to regulation, the activity is inhibited by nikkomycin Z (NikZ). Polymerizes chitin, a structural polymer of the cell wall and septum, by transferring the sugar moiety of UDP-GlcNAc to the non-reducing end of the growing chitin polymer. Involved in mycelial growth, sporangial production, zoospore release and pathogenesis. The protein is Chitin synthase 1 of Phytophthora sojae (strain P6497) (Soybean stem and root rot agent).